A 261-amino-acid polypeptide reads, in one-letter code: Glutamate racemase (261 aa).

Residues 9–10 and 41–42 each bind substrate; these read DS and YG. The Proton donor/acceptor role is filled by C73. 74 to 75 serves as a coordination point for substrate; the sequence is NT. The Proton donor/acceptor role is filled by C179. A substrate-binding site is contributed by 180 to 181; sequence TH.

The protein belongs to the aspartate/glutamate racemases family.

It catalyses the reaction L-glutamate = D-glutamate. It functions in the pathway cell wall biogenesis; peptidoglycan biosynthesis. In terms of biological role, provides the (R)-glutamate required for cell wall biosynthesis. This Aliivibrio fischeri (strain MJ11) (Vibrio fischeri) protein is Glutamate racemase.